A 56-amino-acid chain; its full sequence is Large ribosomal subunit protein bL32 (56 aa).

The interval 1–37 is disordered; that stretch reads MAVQQNKKSRSRRDMRRSHDALTTAAVSVDKASGETH. The span at 7 to 16 shows a compositional bias: basic residues; sequence KKSRSRRDMR.

This sequence belongs to the bacterial ribosomal protein bL32 family.

The protein is Large ribosomal subunit protein bL32 of Haemophilus influenzae (strain PittEE).